We begin with the raw amino-acid sequence, 880 residues long: Translation initiation factor IF-2 (880 aa).

Residues 259-281 (KNREEARAVGRSSKSQSKRKSST) are disordered. Residues 379–548 (SRAPVVTIMG…LLQAEVLELK (170 aa)) enclose the tr-type G domain. The tract at residues 388-395 (GHVDHGKT) is G1. 388-395 (GHVDHGKT) lines the GTP pocket. The G2 stretch occupies residues 413–417 (GITQH). A G3 region spans residues 434–437 (DTPG). GTP contacts are provided by residues 434 to 438 (DTPGH) and 488 to 491 (NKID). Residues 488–491 (NKID) form a G4 region. The segment at 524-526 (SAK) is G5.

This sequence belongs to the TRAFAC class translation factor GTPase superfamily. Classic translation factor GTPase family. IF-2 subfamily.

It is found in the cytoplasm. Functionally, one of the essential components for the initiation of protein synthesis. Protects formylmethionyl-tRNA from spontaneous hydrolysis and promotes its binding to the 30S ribosomal subunits. Also involved in the hydrolysis of GTP during the formation of the 70S ribosomal complex. In Baumannia cicadellinicola subsp. Homalodisca coagulata, this protein is Translation initiation factor IF-2.